A 1465-amino-acid polypeptide reads, in one-letter code: DNA polymerase III PolC-type (1465 aa).

An Exonuclease domain is found at Y427–L583.

This sequence belongs to the DNA polymerase type-C family. PolC subfamily.

It localises to the cytoplasm. The enzyme catalyses DNA(n) + a 2'-deoxyribonucleoside 5'-triphosphate = DNA(n+1) + diphosphate. In terms of biological role, required for replicative DNA synthesis. This DNA polymerase also exhibits 3' to 5' exonuclease activity. This Streptococcus pyogenes serotype M4 (strain MGAS10750) protein is DNA polymerase III PolC-type.